A 229-amino-acid polypeptide reads, in one-letter code: Potassium/proton antiporter CemA (229 aa).

A run of 4 helical transmembrane segments spans residues 7-27 (FTPL…SLSF), 114-134 (ITCF…LVIL), 154-174 (ILLL…ELMI), and 189-209 (IISG…KYWI).

This sequence belongs to the CemA family.

The protein resides in the plastid. It localises to the chloroplast inner membrane. The enzyme catalyses K(+)(in) + H(+)(out) = K(+)(out) + H(+)(in). Contributes to K(+)/H(+) antiport activity by supporting proton efflux to control proton extrusion and homeostasis in chloroplasts in a light-dependent manner to modulate photosynthesis. Prevents excessive induction of non-photochemical quenching (NPQ) under continuous-light conditions. Indirectly promotes efficient inorganic carbon uptake into chloroplasts. This Platanus occidentalis (Sycamore) protein is Potassium/proton antiporter CemA.